The following is a 475-amino-acid chain: UDP-N-acetylmuramoylalanine--D-glutamate ligase (475 aa).

130-136 (GTNGKTT) is an ATP binding site.

This sequence belongs to the MurCDEF family.

It localises to the cytoplasm. It catalyses the reaction UDP-N-acetyl-alpha-D-muramoyl-L-alanine + D-glutamate + ATP = UDP-N-acetyl-alpha-D-muramoyl-L-alanyl-D-glutamate + ADP + phosphate + H(+). The protein operates within cell wall biogenesis; peptidoglycan biosynthesis. Its function is as follows. Cell wall formation. Catalyzes the addition of glutamate to the nucleotide precursor UDP-N-acetylmuramoyl-L-alanine (UMA). The sequence is that of UDP-N-acetylmuramoylalanine--D-glutamate ligase from Corynebacterium diphtheriae (strain ATCC 700971 / NCTC 13129 / Biotype gravis).